A 187-amino-acid polypeptide reads, in one-letter code: uncharacterized protein (187 aa).

4 consecutive transmembrane segments (helical) span residues 29–50 (IFID…VYWI), 70–92 (FVIG…INAY), 128–147 (IFFA…SVLR), and 154–176 (LALV…ISYL).

The protein resides in the cell membrane. This is an uncharacterized protein from Archaeoglobus fulgidus (strain ATCC 49558 / DSM 4304 / JCM 9628 / NBRC 100126 / VC-16).